Reading from the N-terminus, the 671-residue chain is Probable potassium transport system protein Kup (671 aa).

A disordered region spans residues 1-43 (MSQIPSPNDPASTGAAPSSAAVPAGPSATPAPSPTAGFSLPGH). A compositionally biased stretch (low complexity) spans 10 to 37 (PASTGAAPSSAAVPAGPSATPAPSPTAG). Helical transmembrane passes span 52–72 (LAAL…TSPL), 92–112 (VLGV…FKYM), 147–167 (LMLG…TPAI), 181–201 (PAME…LFLF), 209–229 (VGAV…VLGV), 255–275 (GWHG…GEAL), 291–311 (WLGL…ALLL), 323–343 (LLAP…AAIV), 381–401 (IYLP…VLGF), 407–427 (LASA…LLFH), 441–461 (AWPL…ANVV), and 465–485 (DGGW…STWK).

It belongs to the HAK/KUP transporter (TC 2.A.72) family.

Its subcellular location is the cell inner membrane. It carries out the reaction K(+)(in) + H(+)(in) = K(+)(out) + H(+)(out). Transport of potassium into the cell. Likely operates as a K(+):H(+) symporter. This Anaeromyxobacter sp. (strain K) protein is Probable potassium transport system protein Kup.